The sequence spans 332 residues: Formamidase (332 aa).

Residues 14 to 259 (FLAALIQYPV…WEIVTAEVYP (246 aa)) form the CN hydrolase domain. Glu60 serves as the catalytic Proton acceptor. Residue Lys132 is the Proton donor of the active site. Cys165 (nucleophile) is an active-site residue.

Belongs to the carbon-nitrogen hydrolase superfamily. Aliphatic amidase family.

The catalysed reaction is formamide + H2O = formate + NH4(+). In terms of biological role, is an aliphatic amidase with a restricted substrate specificity, as it only hydrolyzes formamide. The polypeptide is Formamidase (Bacillus cereus (strain Q1)).